Here is a 185-residue protein sequence, read N- to C-terminus: Bacteriocin UviA (185 aa).

May have a role in bacteriocin secretion or immunity. The chain is Bacteriocin UviA (uviA) from Clostridium perfringens.